The primary structure comprises 257 residues: NAD-dependent protein deacylase (257 aa).

In terms of domain architecture, Deacetylase sirtuin-type spans 1-252; it reads MLGHAAKLLA…LRRVKDIMAE (252 aa). Residue 20–39 participates in NAD(+) binding; that stretch reads GAGISAESGIPTFRGRNGLW. Substrate is bound by residues Tyr-64 and Arg-67. 98-101 lines the NAD(+) pocket; it reads QNVD. His-116 functions as the Proton acceptor in the catalytic mechanism. The Zn(2+) site is built by Cys-124, Cys-127, Cys-151, and Cys-154. NAD(+) is bound by residues 191–193, 217–219, and Ala-235; these read GTS and NVE.

The protein belongs to the sirtuin family. Class III subfamily. Zn(2+) serves as cofactor.

Its subcellular location is the cytoplasm. The catalysed reaction is N(6)-acetyl-L-lysyl-[protein] + NAD(+) + H2O = 2''-O-acetyl-ADP-D-ribose + nicotinamide + L-lysyl-[protein]. It catalyses the reaction N(6)-succinyl-L-lysyl-[protein] + NAD(+) + H2O = 2''-O-succinyl-ADP-D-ribose + nicotinamide + L-lysyl-[protein]. Functionally, NAD-dependent lysine deacetylase and desuccinylase that specifically removes acetyl and succinyl groups on target proteins. Modulates the activities of several proteins which are inactive in their acylated form. Deacetylates the N-terminal lysine residue of Alba, the major archaeal chromatin protein and that, in turn, increases Alba's DNA binding affinity, thereby repressing transcription. The sequence is that of NAD-dependent protein deacylase from Thermococcus kodakarensis (strain ATCC BAA-918 / JCM 12380 / KOD1) (Pyrococcus kodakaraensis (strain KOD1)).